The chain runs to 233 residues: Biosynthetic peptidoglycan transglycosylase (233 aa).

A helical membrane pass occupies residues 8-28 (LIALPVGIFIFFNAYVYGNII).

The protein belongs to the glycosyltransferase 51 family.

The protein localises to the cell inner membrane. It catalyses the reaction [GlcNAc-(1-&gt;4)-Mur2Ac(oyl-L-Ala-gamma-D-Glu-L-Lys-D-Ala-D-Ala)](n)-di-trans,octa-cis-undecaprenyl diphosphate + beta-D-GlcNAc-(1-&gt;4)-Mur2Ac(oyl-L-Ala-gamma-D-Glu-L-Lys-D-Ala-D-Ala)-di-trans,octa-cis-undecaprenyl diphosphate = [GlcNAc-(1-&gt;4)-Mur2Ac(oyl-L-Ala-gamma-D-Glu-L-Lys-D-Ala-D-Ala)](n+1)-di-trans,octa-cis-undecaprenyl diphosphate + di-trans,octa-cis-undecaprenyl diphosphate + H(+). Its pathway is cell wall biogenesis; peptidoglycan biosynthesis. Peptidoglycan polymerase that catalyzes glycan chain elongation from lipid-linked precursors. This chain is Biosynthetic peptidoglycan transglycosylase, found in Neisseria meningitidis serogroup B (strain ATCC BAA-335 / MC58).